The primary structure comprises 234 residues: Golgi SNAP receptor complex member 1 (234 aa).

Residues 1 to 212 (MSETWEALRK…MQKIKTKKQK (212 aa)) are Cytoplasmic-facing. Residues 54 to 121 (VTTEIEGLIE…RDNVDQVLQR (68 aa)) are a coiled coil. A helical; Anchor for type IV membrane protein membrane pass occupies residues 213 to 233 (NTLILAAVISSCLIFTIFWII). A topological domain (vesicular) is located at residue Asn234.

Belongs to the GOSR1 family. Component of several multiprotein Golgi SNARE complexes.

The protein localises to the golgi apparatus membrane. Functionally, involved in transport from the ER to the Golgi apparatus as well as in intra-Golgi transport. It belongs to a super-family of proteins called t-SNAREs or soluble NSF (N-ethylmaleimide-sensitive factor) attachment protein receptor. Cooperates with ykt-6 for proper expression of Golgi-resident proteins. Required along with ykt-6 for normal embryonic development, seam cell division or differentiation, and ray formation. The polypeptide is Golgi SNAP receptor complex member 1 (gos-28) (Caenorhabditis elegans).